Consider the following 154-residue polypeptide: 6,7-dimethyl-8-ribityllumazine synthase (154 aa).

5-amino-6-(D-ribitylamino)uracil contacts are provided by residues F22, 56 to 58 (AFE), and 80 to 82 (AVI). Position 85–86 (85–86 (AT)) interacts with (2S)-2-hydroxy-3-oxobutyl phosphate. H88 (proton donor) is an active-site residue. 5-amino-6-(D-ribitylamino)uracil is bound at residue F113. R127 is a binding site for (2S)-2-hydroxy-3-oxobutyl phosphate.

The protein belongs to the DMRL synthase family.

The catalysed reaction is (2S)-2-hydroxy-3-oxobutyl phosphate + 5-amino-6-(D-ribitylamino)uracil = 6,7-dimethyl-8-(1-D-ribityl)lumazine + phosphate + 2 H2O + H(+). It functions in the pathway cofactor biosynthesis; riboflavin biosynthesis; riboflavin from 2-hydroxy-3-oxobutyl phosphate and 5-amino-6-(D-ribitylamino)uracil: step 1/2. Catalyzes the formation of 6,7-dimethyl-8-ribityllumazine by condensation of 5-amino-6-(D-ribitylamino)uracil with 3,4-dihydroxy-2-butanone 4-phosphate. This is the penultimate step in the biosynthesis of riboflavin. The polypeptide is 6,7-dimethyl-8-ribityllumazine synthase (Agathobacter rectalis (strain ATCC 33656 / DSM 3377 / JCM 17463 / KCTC 5835 / VPI 0990) (Eubacterium rectale)).